The primary structure comprises 397 residues: 2-deoxy-scyllo-inosose synthase (397 aa).

Residues Asp-41, 71 to 74, 103 to 107, 127 to 128, 138 to 140, and 149 to 150 each bind NAD(+); these read EPYK, GVIGN, TS, SLK, and KN. Lys-140 is an active-site residue. Glu-182 contributes to the Co(2+) binding site. The active site involves Glu-242. Co(2+) is bound by residues His-245 and His-261.

The protein belongs to the sugar phosphate cyclases superfamily. DOI synthase family. The cofactor is NAD(+). Co(2+) is required as a cofactor.

It catalyses the reaction D-glucose 6-phosphate = 2-deoxy-L-scyllo-inosose + phosphate. The protein operates within metabolic intermediate biosynthesis; 2-deoxystreptamine biosynthesis; 2-deoxystreptamine from D-glucose 6-phosphate: step 1/4. It functions in the pathway antibiotic biosynthesis; gentamicin biosynthesis. Functionally, catalyzes the intramolecular carbocycle formation from D-glucose-6-phosphate to 2-deoxy-scyllo-inosose (DOI). The protein is 2-deoxy-scyllo-inosose synthase (gtmA) of Micromonospora echinospora (Micromonospora purpurea).